The following is a 157-amino-acid chain: MFLPHPLLPDLKDLASATAVDHGFELADLQVLAHMQPMTVQIQIRRSSGDDVTLDDCAAFSAPMGEALENSAVLNEAYVLEISSPGIGDHLQSDRDFQTFRRYPVDVIHRDPDGAEQKHSGTLLERTENHLKISIHGRIKQIPRDSILSVELTNPTG.

It belongs to the RimP family.

The protein resides in the cytoplasm. Required for maturation of 30S ribosomal subunits. This Synechococcus sp. (strain CC9311) protein is Ribosome maturation factor RimP.